Here is a 299-residue protein sequence, read N- to C-terminus: Tyrosine recombinase XerC (299 aa).

In terms of domain architecture, Core-binding (CB) spans 1 to 85; it reads MERQLDAYCE…AVRGLYHYLN (85 aa). The region spanning 106–285 is the Tyr recombinase domain; it reads RLPKTLDTDR…DFQHLAAVYD (180 aa). Residues Arg146, Lys170, His237, Arg240, and His263 contribute to the active site. Residue Tyr272 is the O-(3'-phospho-DNA)-tyrosine intermediate of the active site.

It belongs to the 'phage' integrase family. XerC subfamily. Forms a cyclic heterotetrameric complex composed of two molecules of XerC and two molecules of XerD.

It is found in the cytoplasm. Site-specific tyrosine recombinase, which acts by catalyzing the cutting and rejoining of the recombining DNA molecules. The XerC-XerD complex is essential to convert dimers of the bacterial chromosome into monomers to permit their segregation at cell division. It also contributes to the segregational stability of plasmids. This chain is Tyrosine recombinase XerC, found in Pseudomonas fluorescens (strain Pf0-1).